We begin with the raw amino-acid sequence, 23 residues long: U1-poneritoxin-Da3b (23 aa).

It belongs to the non-disulfide-bridged peptide (NDBP) superfamily. Medium-length antimicrobial peptide (group 3) family. Ponericin-W subfamily. In terms of tissue distribution, expressed by the venom gland.

Its subcellular location is the secreted. It localises to the target cell membrane. Functionally, may have antimicrobial properties, like most ant linear peptides. May act by disrupting the integrity of the bacterial cell membrane. This chain is U1-poneritoxin-Da3b, found in Dinoponera australis (Giant neotropical hunting ant).